The sequence spans 733 residues: Non-secreted LysM effector LCP1 (733 aa).

The signal sequence occupies residues 1 to 22 (MMRRPWLLSALVAWVKLPSVQG). LysM domains lie at 211-256 (SEYT…KLCI) and 261-309 (DVYV…TICI). N-linked (GlcNAc...) asparagine glycosylation is found at Asn-298, Asn-304, Asn-340, Asn-350, Asn-381, Asn-432, Asn-442, Asn-455, and Asn-538. Residues 347–393 (LFHNVTAGDDCGTIGLKYSISLDDFIFLNSMIWPNCTNLWLRASYCV) enclose the LysM 3 domain. Over residues 605–629 (SPITSSAPTSTTASSKTSSSAAQPT) the composition is skewed to low complexity. The disordered stretch occupies residues 605–637 (SPITSSAPTSTTASSKTSSSAAQPTNVSTDGTC). Residue Asn-630 is glycosylated (N-linked (GlcNAc...) asparagine). 2 consecutive Chitin-binding type-1 domains span residues 634 to 680 (DGTC…KCDA) and 688 to 733 (DGTC…GVCT). Cystine bridges form between Cys-637-Cys-654, Cys-645-Cys-660, Cys-653-Cys-667, Cys-671-Cys-678, Cys-691-Cys-708, Cys-699-Cys-714, Cys-707-Cys-721, and Cys-725-Cys-732.

This sequence belongs to the secreted LysM effector family.

It is found in the secreted. The protein localises to the cell membrane. Its subcellular location is the vacuole. Its function is as follows. Secreted effector that enables the plant pathogenic fungus to manipulate host defenses for successful infection. Not involved in host recognition and penetration but suppresses host cell death and promotes fumonisin biosynthesis while the pathogen colonizes maize kernels. This Gibberella moniliformis (strain M3125 / FGSC 7600) (Maize ear and stalk rot fungus) protein is Non-secreted LysM effector LCP1.